Here is an 85-residue protein sequence, read N- to C-terminus: Cell division topological specificity factor (85 aa).

The protein belongs to the MinE family.

In terms of biological role, prevents the cell division inhibition by proteins MinC and MinD at internal division sites while permitting inhibition at polar sites. This ensures cell division at the proper site by restricting the formation of a division septum at the midpoint of the long axis of the cell. The sequence is that of Cell division topological specificity factor from Shewanella sp. (strain ANA-3).